Reading from the N-terminus, the 117-residue chain is uncharacterized protein (117 aa).

This is an uncharacterized protein from Escherichia coli O157:H7.